An 853-amino-acid polypeptide reads, in one-letter code: ATP-dependent zinc metalloprotease FtsH (853 aa).

Residues 1–5 (MKNKK) lie on the Cytoplasmic side of the membrane. A helical transmembrane segment spans residues 6–26 (YLQFGGIAAVILIVLFLVSLF). Over 27-113 (SSDTRNFQEV…SYTTNVTQES (87 aa)) the chain is Extracellular. Residues 114–134 (FLMSMLSFILPMVIIFGLLMF) traverse the membrane as a helical segment. At 135-853 (FLTRMQGGGM…NPENEGDNRG (719 aa)) the chain is on the cytoplasmic side. 205–212 (GPPGTGKT) lines the ATP pocket. His-427 provides a ligand contact to Zn(2+). The active site involves Glu-428. Zn(2+) contacts are provided by His-431 and Asp-503. 2 stretches are compositionally biased toward basic and acidic residues: residues 619–632 (ESTR…REPV) and 639–648 (ALERGEEPPK). A disordered region spans residues 619-853 (ESTRFPRQEN…NPENEGDNRG (235 aa)). Over residues 677–695 (PASSAGVAPAAGAAAGSYG) the composition is skewed to low complexity. Polar residues-rich tracts occupy residues 728–739 (TPAQAPEQSPDS) and 770–788 (MDQS…QESP). A compositionally biased stretch (basic and acidic residues) spans 796-813 (LPDHERSDYPEKAQKESV).

It in the central section; belongs to the AAA ATPase family. The protein in the C-terminal section; belongs to the peptidase M41 family. Homohexamer. Zn(2+) serves as cofactor.

The protein resides in the cell membrane. Functionally, acts as a processive, ATP-dependent zinc metallopeptidase for both cytoplasmic and membrane proteins. Plays a role in the quality control of integral membrane proteins. In Corynebacterium glutamicum (strain ATCC 13032 / DSM 20300 / JCM 1318 / BCRC 11384 / CCUG 27702 / LMG 3730 / NBRC 12168 / NCIMB 10025 / NRRL B-2784 / 534), this protein is ATP-dependent zinc metalloprotease FtsH.